Here is a 419-residue protein sequence, read N- to C-terminus: MGMTIAEKILAAHAGQEEASPGDLINAKVDIALGNDITAPIAIKLFRQSGAAKVFDKDRVVLVPDHFTPTKDINSAMQVKMVRDFAREQELSHWYEGGDSGVEHALLPEKGIVGPGDLVIGADSHTCTYGGLGAFATGVGSTDLAAAMITGEVWLKVPESIKFVYKGKLRPHVEGKDLILHTIGDIGVDGALYMAMEFTGEVIDALPMAERLTMANMAIEAGGKAGIIAPDAKTKEYADGRVIRKPVFYASDPDAKYAKVIEYDVTDLEPQVAFPHLPENTRPISQVGEVPIHQVIIGSCTNGRIEDMRSAARILTGNKADKNVRLIIIPATPQIYRQAMEEGLFDTFLSAGAVISPPTCGPCLGGHMGILAAGERAVATTNRNFVGRMGHVESEVYLANPAVAAASAIAGKIAGPDDI.

3 residues coordinate [4Fe-4S] cluster: cysteine 300, cysteine 360, and cysteine 363.

It belongs to the aconitase/IPM isomerase family. LeuC type 2 subfamily. Heterodimer of LeuC and LeuD. Requires [4Fe-4S] cluster as cofactor.

It carries out the reaction (2R,3S)-3-isopropylmalate = (2S)-2-isopropylmalate. Its pathway is amino-acid biosynthesis; L-leucine biosynthesis; L-leucine from 3-methyl-2-oxobutanoate: step 2/4. In terms of biological role, catalyzes the isomerization between 2-isopropylmalate and 3-isopropylmalate, via the formation of 2-isopropylmaleate. The polypeptide is 3-isopropylmalate dehydratase large subunit (Desulfatibacillum aliphaticivorans).